The sequence spans 321 residues: Putative pyridoxal kinase (321 aa).

Positions 23 and 144 each coordinate substrate. Residues 203-204 (TS) and 230-242 (TFPR…VGTG) contribute to the ATP site. Asp243 serves as a coordination point for substrate.

It belongs to the pyridoxine kinase family. The cofactor is Zn(2+). Requires Mg(2+) as cofactor.

It carries out the reaction pyridoxal + ATP = pyridoxal 5'-phosphate + ADP + H(+). In terms of biological role, required for synthesis of pyridoxal-5-phosphate from vitamin B6. The sequence is that of Putative pyridoxal kinase from Caenorhabditis elegans.